The following is a 195-amino-acid chain: Der GTPase-activating protein YihI (195 aa).

Positions 1–81 are disordered; sequence MSRTKKTRRI…KAVVKEVKDP (81 aa). 3 stretches are compositionally biased toward basic and acidic residues: residues 9–23, 38–49, and 66–81; these read RITD…DKPK, TRYELDAQAREE, and DPAE…VKDP.

It belongs to the YihI family. In terms of assembly, interacts with Der.

Its function is as follows. A GTPase-activating protein (GAP) that modifies Der/EngA GTPase function. May play a role in ribosome biogenesis. The chain is Der GTPase-activating protein YihI from Mannheimia haemolytica (Pasteurella haemolytica).